We begin with the raw amino-acid sequence, 639 residues long: Chaperone protein HtpG (639 aa).

Positions 1-347 (MSHQETHGFQ…SNDLPLNVSR (347 aa)) are a; substrate-binding. A b region spans residues 348–564 (EILQDNKITT…AGEMSSQMIK (217 aa)). The tract at residues 565–639 (LMQAAGQAVT…MNKMLLASVK (75 aa)) is c.

Belongs to the heat shock protein 90 family. In terms of assembly, homodimer.

The protein resides in the cytoplasm. Its function is as follows. Molecular chaperone. Has ATPase activity. The sequence is that of Chaperone protein HtpG from Shewanella loihica (strain ATCC BAA-1088 / PV-4).